Here is a 333-residue protein sequence, read N- to C-terminus: MSEIGTRVYTECDADLSLIQNVLVAVIGYGSQGHAQALNLRDSGVNVVIGLKENSASRKSAQDSGFEVLLPQEAAKKAQLIALLVPDPAQRDVYESAIKHNLSEGDALLFSHGFNIRYGYITPPDGVDVLMVAPKGPGHMVRREYLDNRGTPAVFAIEKDASGRCFDLALSYAKGIGALRAGAIQTTFTEETETDLFGEQAVLCGGLEQLIQYGYETLVEAGYQPEVAYFEVLHELKLIIDLIVEGGLSKSRWSISDTAEYGSYVSGPRVIDKHVKENMKKILGEIRSGEFANRFIKDQDSGANEFTQLREIAARHPIEEVGARLRALFSWSK.

One can recognise a KARI N-terminal Rossmann domain in the interval 6–186 (TRVYTECDAD…GALRAGAIQT (181 aa)). NADP(+) contacts are provided by residues 29–32 (YGSQ), K52, S55, S57, and 87–90 (DPAQ). H112 is an active-site residue. G138 provides a ligand contact to NADP(+). The 146-residue stretch at 187 to 332 (TFTEETETDL…ARLRALFSWS (146 aa)) folds into the KARI C-terminal knotted domain. D195, E199, E231, and E235 together coordinate Mg(2+). S256 provides a ligand contact to substrate.

It belongs to the ketol-acid reductoisomerase family. Mg(2+) serves as cofactor.

The catalysed reaction is (2R)-2,3-dihydroxy-3-methylbutanoate + NADP(+) = (2S)-2-acetolactate + NADPH + H(+). It catalyses the reaction (2R,3R)-2,3-dihydroxy-3-methylpentanoate + NADP(+) = (S)-2-ethyl-2-hydroxy-3-oxobutanoate + NADPH + H(+). The protein operates within amino-acid biosynthesis; L-isoleucine biosynthesis; L-isoleucine from 2-oxobutanoate: step 2/4. It functions in the pathway amino-acid biosynthesis; L-valine biosynthesis; L-valine from pyruvate: step 2/4. In terms of biological role, involved in the biosynthesis of branched-chain amino acids (BCAA). Catalyzes an alkyl-migration followed by a ketol-acid reduction of (S)-2-acetolactate (S2AL) to yield (R)-2,3-dihydroxy-isovalerate. In the isomerase reaction, S2AL is rearranged via a Mg-dependent methyl migration to produce 3-hydroxy-3-methyl-2-ketobutyrate (HMKB). In the reductase reaction, this 2-ketoacid undergoes a metal-dependent reduction by NADPH to yield (R)-2,3-dihydroxy-isovalerate. The protein is Ketol-acid reductoisomerase (NADP(+)) of Tropheryma whipplei (strain TW08/27) (Whipple's bacillus).